Reading from the N-terminus, the 587-residue chain is tRNA (guanine(37)-N(1))-methyltransferase 2 (587 aa).

S-adenosyl-L-methionine-binding positions include Arg-360 and 430–431 (DA). Residues 446–469 (ASTRSRKEDVTNKDGNHVTPTEPM) form a disordered region. A compositionally biased stretch (basic and acidic residues) spans 450-461 (SRKEDVTNKDGN). Asn-478 lines the S-adenosyl-L-methionine pocket.

It belongs to the class I-like SAM-binding methyltransferase superfamily. TRM5/TYW2 family. Monomer.

The protein localises to the mitochondrion matrix. It is found in the nucleus. It localises to the cytoplasm. The catalysed reaction is guanosine(37) in tRNA + S-adenosyl-L-methionine = N(1)-methylguanosine(37) in tRNA + S-adenosyl-L-homocysteine + H(+). In terms of biological role, specifically methylates the N1 position of guanosine-37 in various cytoplasmic and mitochondrial tRNAs. Methylation is not dependent on the nature of the nucleoside 5' of the target nucleoside. This is the first step in the biosynthesis of wybutosine (yW), a modified base adjacent to the anticodon of tRNAs and required for accurate decoding. The protein is tRNA (guanine(37)-N(1))-methyltransferase 2 of Phaeodactylum tricornutum (strain CCAP 1055/1).